The primary structure comprises 200 residues: Probable GTP-binding protein EngB (200 aa).

In terms of domain architecture, EngB-type G spans 23-197; that stretch reads KNSEVVFIGR…RERVLKDVLG (175 aa). GTP contacts are provided by residues 31–38, 58–62, 83–86, 153–156, and 175–177; these read GRSNVGKS, GKTQL, DLPG, TKMD, and FTA. 2 residues coordinate Mg(2+): serine 38 and threonine 60.

It belongs to the TRAFAC class TrmE-Era-EngA-EngB-Septin-like GTPase superfamily. EngB GTPase family. It depends on Mg(2+) as a cofactor.

In terms of biological role, necessary for normal cell division and for the maintenance of normal septation. The polypeptide is Probable GTP-binding protein EngB (Wolinella succinogenes (strain ATCC 29543 / DSM 1740 / CCUG 13145 / JCM 31913 / LMG 7466 / NCTC 11488 / FDC 602W) (Vibrio succinogenes)).